Consider the following 93-residue polypeptide: Mitochondrial import inner membrane translocase subunit Tim10-A (93 aa).

The short motif at 32–57 (CHKKCVPPHYKEAELSKGESVCLDRC) is the Twin CX3C motif element. 2 cysteine pairs are disulfide-bonded: Cys32–Cys57 and Cys36–Cys53.

This sequence belongs to the small Tim family. Heterohexamer; composed of 3 copies of TIMM9 and 3 copies of TIMM10/TIM10A, named soluble 70 kDa complex. The complex forms a 6-bladed alpha-propeller structure and associates with the TIMM22 component of the TIM22 complex. Interacts with multi-pass transmembrane proteins in transit.

The protein resides in the mitochondrion inner membrane. Its function is as follows. Mitochondrial intermembrane chaperone that participates in the import and insertion of multi-pass transmembrane proteins into the mitochondrial inner membrane. May also be required for the transfer of beta-barrel precursors from the TOM complex to the sorting and assembly machinery (SAM complex) of the outer membrane. Acts as a chaperone-like protein that protects the hydrophobic precursors from aggregation and guide them through the mitochondrial intermembrane space. This chain is Mitochondrial import inner membrane translocase subunit Tim10-A (timm10-a), found in Xenopus laevis (African clawed frog).